We begin with the raw amino-acid sequence, 396 residues long: Alanine racemase (396 aa).

Lys46 serves as the catalytic Proton acceptor; specific for D-alanine. Lys46 carries the N6-(pyridoxal phosphate)lysine modification. Arg145 contributes to the substrate binding site. The active-site Proton acceptor; specific for L-alanine is the Tyr280. Met328 is a substrate binding site.

This sequence belongs to the alanine racemase family. Requires pyridoxal 5'-phosphate as cofactor.

It carries out the reaction L-alanine = D-alanine. The protein operates within amino-acid biosynthesis; D-alanine biosynthesis; D-alanine from L-alanine: step 1/1. Functionally, catalyzes the interconversion of L-alanine and D-alanine. May also act on other amino acids. The sequence is that of Alanine racemase (alr) from Brucella ovis (strain ATCC 25840 / 63/290 / NCTC 10512).